The sequence spans 214 residues: Outer-membrane lipoprotein LolB (214 aa).

A signal peptide spans 1–25 (MNNLKRLTKTIFSCFTLSALLLLAG). C26 carries N-palmitoyl cysteine lipidation. Residue C26 is the site of S-diacylglycerol cysteine attachment.

The protein belongs to the LolB family. Monomer.

It is found in the cell outer membrane. Plays a critical role in the incorporation of lipoproteins in the outer membrane after they are released by the LolA protein. The sequence is that of Outer-membrane lipoprotein LolB from Shewanella baltica (strain OS155 / ATCC BAA-1091).